The primary structure comprises 339 residues: Dihydroorotase (339 aa).

Residues His12 and His14 each coordinate Zn(2+). Substrate is bound by residues 14–16 (HVR) and Asn40. Residues Lys94, His133, His167, and Asp239 each coordinate Zn(2+). Lys94 bears the N6-carboxylysine mark. Residue His133 participates in substrate binding. The active site involves Asp239. Substrate contacts are provided by His243 and Ala255.

Belongs to the metallo-dependent hydrolases superfamily. DHOase family. Class II DHOase subfamily. Homodimer. Zn(2+) is required as a cofactor.

The catalysed reaction is (S)-dihydroorotate + H2O = N-carbamoyl-L-aspartate + H(+). It functions in the pathway pyrimidine metabolism; UMP biosynthesis via de novo pathway; (S)-dihydroorotate from bicarbonate: step 3/3. Its function is as follows. Catalyzes the reversible cyclization of carbamoyl aspartate to dihydroorotate. In Helicobacter pylori (strain P12), this protein is Dihydroorotase.